The sequence spans 81 residues: Protein Vpu (81 aa).

Residues 1-7 (MQSLQVL) lie on the Extracellular side of the membrane. The chain crosses the membrane as a helical span at residues 8 to 28 (AIVALVVATIIAIVVWTIVFI). Over 29-81 (EYRKILRQRKIDRLINRITERAEDSGNESDGDQEELSALVERGHLAPWDVDDL) the chain is Cytoplasmic. A disordered region spans residues 50 to 81 (AEDSGNESDGDQEELSALVERGHLAPWDVDDL). Phosphoserine; by host CK2 occurs at positions 53 and 57. The span at 53 to 63 (SGNESDGDQEE) shows a compositional bias: acidic residues.

It belongs to the HIV-1 VPU protein family. As to quaternary structure, homopentamer. Interacts with host CD4 and BRTC; these interactions induce proteasomal degradation of CD4. Interacts with host BST2; this interaction leads to the degradation of host BST2. Interacts with host FBXW11. Interacts with host AP1M1; this interaction plays a role in the mistrafficking and subsequent degradation of host BST2. Interacts with host RANBP2; this interaction allows Vpu to down-regulate host BLM sumoylation. Phosphorylated by host CK2. This phosphorylation is necessary for interaction with human BTRC and degradation of CD4.

The protein resides in the host membrane. Ion channel activity is inhibited by hexamethylene amiloride in vitro. Its function is as follows. Enhances virion budding by targeting host CD4 and Tetherin/BST2 to proteasome degradation. Degradation of CD4 prevents any unwanted premature interactions between viral Env and its host receptor CD4 in the endoplasmic reticulum. Degradation of antiretroviral protein Tetherin/BST2 is important for virion budding, as BST2 tethers new viral particles to the host cell membrane. Mechanistically, Vpu bridges either CD4 or BST2 to BTRC, a substrate recognition subunit of the Skp1/Cullin/F-box protein E3 ubiquitin ligase, induces their ubiquitination and subsequent proteasomal degradation. The alteration of the E3 ligase specificity by Vpu seems to promote the degradation of host IKBKB, leading to NF-kappa-B down-regulation and subsequent apoptosis. Acts as a viroporin that forms an oligomeric ion channel in membranes. Modulates the host DNA repair mechanisms to promote degradation of nuclear viral cDNA in cells that are already productively infected in order to suppress immune sensing and proviral hyper-integration (superinfection). Manipulates PML-NBs and modulates SUMOylation of host BLM protein thereby enhancing its DNA-end processing activity toward viral unintegrated linear DNA. Also inhibits RAD52-mediated homologous repair of viral cDNA, preventing the generation of dead-end circular forms of single copies of the long terminal repeat and permitting sustained nucleolytic attack. The sequence is that of Protein Vpu from Human immunodeficiency virus type 1 group M subtype B (isolate YU-2) (HIV-1).